The following is a 172-amino-acid chain: Large ribosomal subunit protein uL10 (172 aa).

Belongs to the universal ribosomal protein uL10 family. As to quaternary structure, part of the ribosomal stalk of the 50S ribosomal subunit. The N-terminus interacts with L11 and the large rRNA to form the base of the stalk. The C-terminus forms an elongated spine to which L12 dimers bind in a sequential fashion forming a multimeric L10(L12)X complex.

In terms of biological role, forms part of the ribosomal stalk, playing a central role in the interaction of the ribosome with GTP-bound translation factors. The sequence is that of Large ribosomal subunit protein uL10 from Rhodopseudomonas palustris (strain BisA53).